The sequence spans 61 residues: Small ribosomal subunit protein uS14B (61 aa).

Cys-24, Cys-27, Cys-40, and Cys-43 together coordinate Zn(2+).

This sequence belongs to the universal ribosomal protein uS14 family. Zinc-binding uS14 subfamily. Part of the 30S ribosomal subunit. Contacts proteins S3 and S10. The cofactor is Zn(2+).

In terms of biological role, binds 16S rRNA, required for the assembly of 30S particles and may also be responsible for determining the conformation of the 16S rRNA at the A site. This chain is Small ribosomal subunit protein uS14B, found in Ligilactobacillus salivarius (strain UCC118) (Lactobacillus salivarius).